A 275-amino-acid chain; its full sequence is Polyamine aminopropyltransferase (275 aa).

The 234-residue stretch at 2 to 235 folds into the PABS domain; it reads ELWFTEKQTK…GLWTFTIGSK (234 aa). Gln31 serves as a coordination point for S-methyl-5'-thioadenosine. Residues His62 and Asp86 each contribute to the spermidine site. Residues Glu106 and 137-138 each bind S-methyl-5'-thioadenosine; that span reads DG. Residue Asp155 is the Proton acceptor of the active site. Position 155 to 158 (155 to 158) interacts with spermidine; it reads DSTE. Pro162 contacts S-methyl-5'-thioadenosine.

This sequence belongs to the spermidine/spermine synthase family. Homodimer or homotetramer.

The protein localises to the cytoplasm. It catalyses the reaction S-adenosyl 3-(methylsulfanyl)propylamine + putrescine = S-methyl-5'-thioadenosine + spermidine + H(+). Its pathway is amine and polyamine biosynthesis; spermidine biosynthesis; spermidine from putrescine: step 1/1. In terms of biological role, catalyzes the irreversible transfer of a propylamine group from the amino donor S-adenosylmethioninamine (decarboxy-AdoMet) to putrescine (1,4-diaminobutane) to yield spermidine. This chain is Polyamine aminopropyltransferase, found in Bacillus mycoides (strain KBAB4) (Bacillus weihenstephanensis).